The sequence spans 336 residues: Vacuolar protein sorting-associated protein 26B (336 aa).

Phosphoserine is present on residues serine 302, serine 304, and serine 319.

Belongs to the VPS26 family. As to quaternary structure, component of the heterotrimeric retromer cargo-selective complex (CSC), also described as vacuolar protein sorting subcomplex (VPS), formed by VPS26 (VPS26A or VPS26B), VPS29 and VPS35. The CSC has a highly elongated structure with VPS26 and VPS29 binding independently at opposite distal ends of VPS35 as central platform. The CSC is believed to associate with variable sorting nexins to form functionally distinct retromer complex variants. The originally described SNX-BAR retromer is a pentamer containing the CSC and a heterodimeric membrane-deforming subcomplex formed between SNX1 or SNX2 and SNX5 or SNX6 (also called SNX-BAR subcomplex); the respective CSC and SNX-BAR subcomplexes associate with low affinity. The CSC associates with SNX3 to form a SNX3-retromer complex. The CSC associates with SNX27, the WASH complex and the SNX-BAR subcomplex to form the SNX27-retromer complex. Interacts with VPS29, VPS35, TBC1D5, GOLPH3, SNX27. Ubiquitously expressed in developing embryo and adult. Highly expressed in brain.

It is found in the cytoplasm. The protein localises to the membrane. Its subcellular location is the early endosome. It localises to the late endosome. Acts as a component of the retromer cargo-selective complex (CSC). The CSC is believed to be the core functional component of retromer or respective retromer complex variants acting to prevent missorting of selected transmembrane cargo proteins into the lysosomal degradation pathway. The recruitment of the CSC to the endosomal membrane involves RAB7A and SNX3. The SNX-BAR retromer mediates retrograde transport of cargo proteins from endosomes to the trans-Golgi network (TGN) and is involved in endosome-to-plasma membrane transport for cargo protein recycling. The SNX3-retromer mediates the retrograde transport of WLS distinct from the SNX-BAR retromer pathway. The SNX27-retromer is believed to be involved in endosome-to-plasma membrane trafficking and recycling of a broad spectrum of cargo proteins. The CSC seems to act as recruitment hub for other proteins, such as the WASH complex and TBC1D5. May be involved in retrograde transport of SORT1 but not of IGF2R. Acts redundantly with VSP26A in SNX-27 mediated endocytic recycling of SLC2A1/GLUT1. The protein is Vacuolar protein sorting-associated protein 26B (Vps26b) of Mus musculus (Mouse).